A 285-amino-acid polypeptide reads, in one-letter code: 2-dehydro-3-deoxyphosphooctonate aldolase (285 aa).

The protein belongs to the KdsA family.

Its subcellular location is the cytoplasm. It catalyses the reaction D-arabinose 5-phosphate + phosphoenolpyruvate + H2O = 3-deoxy-alpha-D-manno-2-octulosonate-8-phosphate + phosphate. The protein operates within carbohydrate biosynthesis; 3-deoxy-D-manno-octulosonate biosynthesis; 3-deoxy-D-manno-octulosonate from D-ribulose 5-phosphate: step 2/3. It functions in the pathway bacterial outer membrane biogenesis; lipopolysaccharide biosynthesis. This Methylibium petroleiphilum (strain ATCC BAA-1232 / LMG 22953 / PM1) protein is 2-dehydro-3-deoxyphosphooctonate aldolase.